Reading from the N-terminus, the 316-residue chain is Annexin A13 (316 aa).

The N-myristoyl glycine moiety is linked to residue Gly-2. 4 Annexin repeats span residues 14 to 85, 86 to 157, 169 to 241, and 245 to 316; these read FDVD…ALLD, RPSE…SLLQ, DLAG…TLVR, and DQEG…ALLH.

The protein belongs to the annexin family. As to quaternary structure, monomer and homodimer. Detected in intestine, and at much lower levels also in kidney (at protein level).

Its subcellular location is the apical cell membrane. It localises to the cell membrane. It is found in the cytoplasmic vesicle. Functionally, binds to membranes enriched in phosphatidylserine or phosphatidylglycerol in a calcium-dependent manner. Half-maximal membrane binding requires about 60 uM calcium. Does not bind to membranes that lack phospholipids with an acidic headgroup. In terms of biological role, binds to membranes enriched in phosphatidylserine or phosphatidylglycerol in a calcium-dependent manner, but requires higher calcium levels for membrane binding than isoform A. Half-maximal membrane binding requires about 320 uM calcium. May play a role in vesicular traffic to the apical plasma membrane. This chain is Annexin A13 (ANXA13), found in Canis lupus familiaris (Dog).